The following is a 406-amino-acid chain: Protease ElaD (406 aa).

H234 is an active-site residue. The active-site Nucleophile is C316.

The protein belongs to the peptidase C79 family.

Functionally, protease that can act as an efficient and specific deubiquitinating enzyme in vitro. Does not possess desumoylating and deneddylating activities. The physiological substrate is unknown. This chain is Protease ElaD (elaD), found in Escherichia coli O139:H28 (strain E24377A / ETEC).